Reading from the N-terminus, the 522-residue chain is Nuclear pore glycoprotein p62 (522 aa).

An N-acetylserine modification is found at Ser-2. A run of 5 repeats spans residues Phe-6–Gly-7, Phe-44–Gly-45, Phe-76–Gly-77, Phe-114–Gly-115, and Phe-142–Gly-143. The tract at residues Phe-6–Gly-143 is 5 X 2 AA repeats of F-G. Over residues Ser-169–Ser-179 the composition is skewed to polar residues. Disordered stretches follow at residues Ser-169 to Thr-215 and Ala-260 to Thr-288. Composition is skewed to low complexity over residues Ala-180 to Thr-215 and Gly-262 to Thr-288. Residues Met-328 to Leu-458 are required for centrosome localization. A coiled-coil region spans residues Met-328–Leu-458. A glycan (O-linked (GlcNAc) threonine) is linked at Thr-373. Ser-408 and Ser-418 each carry phosphoserine. Ser-468 is a glycosylation site (O-linked (GlcNAc) serine).

This sequence belongs to the nucleoporin NSP1/NUP62 family. In terms of assembly, component of the p62 complex, a complex at least composed of NUP62, NUP54, and NUP58. Interacts with NUP88. Interacts with NUTF2. Interacts with HIKESHI. Interacts with OSBPL8. Interacts with CAPG. Interacts with SAS6 and TUBG1 at the centrosome. Interacts with MCM3AP isoform GANP. (Microbial infection) Interacts with Epstein-barr virus BGLF4; this interaction allows BGLF4 nuclear entry. In terms of processing, O-glycosylated. Contains about 10 N-acetylglucosamine side chain sites predicted for the entire protein, among which only one in the C-terminal. Post-translationally, the inner channel of the NPC has a different redox environment from the cytoplasm and allows the formation of interchain disulfide bonds between some nucleoporins, the significant increase of these linkages upon oxidative stress reduces the permeability of the NPC.

The protein localises to the nucleus. It localises to the nuclear pore complex. It is found in the cytoplasm. Its subcellular location is the cytoskeleton. The protein resides in the spindle pole. The protein localises to the nucleus envelope. It localises to the microtubule organizing center. It is found in the centrosome. Functionally, essential component of the nuclear pore complex. The N-terminal is probably involved in nucleocytoplasmic transport. The C-terminal is involved in protein-protein interaction probably via coiled-coil formation, promotes its association with centrosomes and may function in anchorage of p62 to the pore complex. Plays a role in mitotic cell cycle progression by regulating centrosome segregation, centriole maturation and spindle orientation. It might be involved in protein recruitment to the centrosome after nuclear breakdown. This Homo sapiens (Human) protein is Nuclear pore glycoprotein p62 (NUP62).